Reading from the N-terminus, the 382-residue chain is UDP-N-acetylenolpyruvoylglucosamine reductase (382 aa).

Positions 50–253 (RVGGPAVLAE…REAVLRLRAS (204 aa)) constitute an FAD-binding PCMH-type domain. Arg-193 is a catalytic residue. Catalysis depends on Ser-270, which acts as the Proton donor. Glu-374 is a catalytic residue.

It belongs to the MurB family. FAD is required as a cofactor.

The protein resides in the cytoplasm. The catalysed reaction is UDP-N-acetyl-alpha-D-muramate + NADP(+) = UDP-N-acetyl-3-O-(1-carboxyvinyl)-alpha-D-glucosamine + NADPH + H(+). It functions in the pathway cell wall biogenesis; peptidoglycan biosynthesis. Its function is as follows. Cell wall formation. This chain is UDP-N-acetylenolpyruvoylglucosamine reductase, found in Nocardia farcinica (strain IFM 10152).